A 314-amino-acid polypeptide reads, in one-letter code: Olfactory receptor 51I1 (314 aa).

At 1–27 (MLGLNGTPFQPATLQLTGIPGIQTGLT) the chain is on the extracellular side. Residues 28 to 48 (WVALIFCILYMISIVGNLSIL) traverse the membrane as a helical segment. The Cytoplasmic segment spans residues 49 to 56 (TLVFWEPA). A helical transmembrane segment spans residues 57-77 (LHQPMYYFLSMLALNDLGVSF). Residues 78–101 (STLPTVISTFCFNYNHVAFNACLV) lie on the Extracellular side of the membrane. Cysteines 99 and 191 form a disulfide. Residues 102–122 (QMFFIHTFSFMESGILLAMSL) form a helical membrane-spanning segment. Topologically, residues 123–141 (DRFVAICYPLRYVTVLTHN) are cytoplasmic. The helical transmembrane segment at 142–162 (RILAMGLGILTKSFTTLFPFP) threads the bilayer. Over 163-198 (FVVKRLPFCKGNVLHHSYCLHPDLMKVACGDIHVNN) the chain is Extracellular. Residues 199–219 (IYGLLVIIFTYGMDSTFILLS) form a helical membrane-spanning segment. At 220–239 (YALILRAMLVIISQEQRLKA) the chain is on the cytoplasmic side. A helical membrane pass occupies residues 240-260 (LNTCMSHICAVLAFYVPIIAV). Residues 261–275 (SMIHRFWKSAPPVVH) are Extracellular-facing. Residues 276 to 296 (VMMSNVYLFVPPMLNPIIYSV) traverse the membrane as a helical segment. Over 297 to 314 (KTKEIRKGILKFFHKSQA) the chain is Cytoplasmic.

This sequence belongs to the G-protein coupled receptor 1 family.

The protein localises to the cell membrane. Odorant receptor. This is Olfactory receptor 51I1 (OR51I1) from Homo sapiens (Human).